A 146-amino-acid chain; its full sequence is NADH-quinone oxidoreductase subunit A (146 aa).

3 helical membrane passes run 14–34, 68–88, and 96–116; these read FALF…GGFL, LVAM…AWAV, and IGFI…IYLV.

Belongs to the complex I subunit 3 family. As to quaternary structure, NDH-1 is composed of 13 different subunits. Subunits NuoA, H, J, K, L, M, N constitute the membrane sector of the complex.

The protein localises to the cell inner membrane. It catalyses the reaction a quinone + NADH + 5 H(+)(in) = a quinol + NAD(+) + 4 H(+)(out). Functionally, NDH-1 shuttles electrons from NADH, via FMN and iron-sulfur (Fe-S) centers, to quinones in the respiratory chain. The immediate electron acceptor for the enzyme in this species is believed to be ubiquinone. Couples the redox reaction to proton translocation (for every two electrons transferred, four hydrogen ions are translocated across the cytoplasmic membrane), and thus conserves the redox energy in a proton gradient. The sequence is that of NADH-quinone oxidoreductase subunit A from Pectobacterium atrosepticum (strain SCRI 1043 / ATCC BAA-672) (Erwinia carotovora subsp. atroseptica).